The sequence spans 333 residues: Mevalonate kinase (333 aa).

109-119 is a binding site for ATP; that stretch reads PVGAGLGSSAA. Catalysis depends on D160, which acts as the Proton acceptor.

Belongs to the GHMP kinase family. Mevalonate kinase subfamily. As to quaternary structure, homodimer. Requires Mg(2+) as cofactor.

The protein localises to the cytoplasm. It catalyses the reaction (R)-mevalonate + ATP = (R)-5-phosphomevalonate + ADP + H(+). It functions in the pathway isoprenoid biosynthesis; isopentenyl diphosphate biosynthesis via mevalonate pathway; isopentenyl diphosphate from (R)-mevalonate: step 1/3. Its function is as follows. Catalyzes the phosphorylation of (R)-mevalonate (MVA) to (R)-mevalonate 5-phosphate (MVAP). Functions in the mevalonate (MVA) pathway leading to isopentenyl diphosphate (IPP), a key precursor for the biosynthesis of isoprenoid compounds such as archaeal membrane lipids. This Thermococcus sibiricus (strain DSM 12597 / MM 739) protein is Mevalonate kinase.